Reading from the N-terminus, the 320-residue chain is Zygote arrest protein 1 (320 aa).

Disordered stretches follow at residues 106–130 (ELRR…EVRY) and 155–208 (DRPA…AEGS). The 3CxxC-type zinc-finger motif lies at 222 to 305 (KYGYYHCREC…RQDLCGRCKG (84 aa)).

This sequence belongs to the ZAR1 family.

It localises to the cytoplasm. The protein resides in the cytoplasmic ribonucleoprotein granule. MRNA-binding protein required for maternal mRNA storage, translation and degradation during oocyte maturation. Probably promotes formation of some phase-separated membraneless compartment that stores maternal mRNAs in oocytes: acts by undergoing liquid-liquid phase separation upon binding to maternal mRNAs. Binds to the 3'-UTR of maternal mRNAs, inhibiting their translation. This is Zygote arrest protein 1 from Takifugu rubripes (Japanese pufferfish).